The chain runs to 643 residues: Cytoplasmic dynein 1 intermediate chain 1 (643 aa).

Basic and acidic residues-rich tracts occupy residues 1 to 13 (MSDKSDLKAELER) and 20 to 60 (QIRE…RETE). Disordered stretches follow at residues 1 to 65 (MSDK…LLQS) and 96 to 123 (MSPSSKSVSTPSEAGSQDDLGPLTRTLQ). S2 carries the N-acetylserine modification. The interaction with DCTN1 stretch occupies residues 2–123 (SDKSDLKAEL…DLGPLTRTLQ (122 aa)). Phosphoserine is present on residues S50 and S100. Positions 96-107 (MSPSSKSVSTPS) are enriched in low complexity. A Phosphothreonine modification is found at T105. Phosphoserine occurs at positions 107 and 111. An interaction with DYNLT1 region spans residues 145-161 (KLGVSKVTQVDFLPREV). Positions 167-219 (ETQTPLATHQSEEDEEDEEMVEPKVGHDSELENQDKKQETKEAPPRELTEEEK) are disordered. A Phosphothreonine modification is found at T174. Phosphoserine is present on residues S177 and S195. Residues 187-219 (VEPKVGHDSELENQDKKQETKEAPPRELTEEEK) are compositionally biased toward basic and acidic residues. WD repeat units lie at residues 283 to 332 (SKHR…TTPE), 336 to 376 (HCQS…RTPV), 385 to 426 (AHTH…TPQE), 435 to 475 (SKPV…AGIG), 480 to 525 (GHQG…PLYS), 528 to 568 (DNAD…EVPT), and 574 to 613 (EGAYALNRVRWAQGGKEVAVGDSEGRIWIYDVGELAVPHN). S633 is subject to Phosphoserine.

The protein belongs to the dynein intermediate chain family. As to quaternary structure, homodimer. The cytoplasmic dynein 1 complex consists of two catalytic heavy chains (HCs) and a number of non-catalytic subunits presented by intermediate chains (ICs), light intermediate chains (LICs) and light chains (LCs); the composition seems to vary in respect to the IC, LIC and LC composition. The heavy chain homodimer serves as a scaffold for the probable homodimeric assembly of the respective non-catalytic subunits. The ICs and LICs bind directly to the HC dimer and the LCs assemble on the IC dimer. Isoform 1, isoform 2 and isoform 3 interact with DYNC1H1. Isoform 1, isoform 2 and isoform 3 interact with DYNLT3. Isoform 1, isoform 2 and isoform 3 interact with DYNLT1. Interacts with DCTN1. Interacts with MCRS1; the interaction is required for the proper distribution of centriolar satellites. In terms of tissue distribution, high levels seen in the brain and testis, while a lower level expression is seen in the liver, spleen, kidney, lung, skeletal muscle and heart.

It is found in the cytoplasm. Its subcellular location is the chromosome. The protein resides in the centromere. The protein localises to the kinetochore. It localises to the cytoskeleton. It is found in the spindle pole. Its function is as follows. Acts as one of several non-catalytic accessory components of the cytoplasmic dynein 1 complex that are thought to be involved in linking dynein to cargos and to adapter proteins that regulate dynein function. Cytoplasmic dynein 1 acts as a motor for the intracellular retrograde motility of vesicles and organelles along microtubules. The intermediate chains mediate the binding of dynein to dynactin via its 150 kDa component (p150-glued) DCTN1. May play a role in mediating the interaction of cytoplasmic dynein with membranous organelles and kinetochores. The chain is Cytoplasmic dynein 1 intermediate chain 1 (Dync1i1) from Rattus norvegicus (Rat).